The chain runs to 334 residues: Anthranilate phosphoribosyltransferase (334 aa).

5-phospho-alpha-D-ribose 1-diphosphate is bound by residues glycine 79, 82 to 83 (GD), serine 87, 89 to 92 (NIST), 107 to 115 (KHGNRSISS), and serine 119. An anthranilate-binding site is contributed by glycine 79. Serine 91 is a Mg(2+) binding site. Residue asparagine 110 participates in anthranilate binding. Position 165 (arginine 165) interacts with anthranilate. Positions 224 and 225 each coordinate Mg(2+).

The protein belongs to the anthranilate phosphoribosyltransferase family. Homodimer. The cofactor is Mg(2+).

It catalyses the reaction N-(5-phospho-beta-D-ribosyl)anthranilate + diphosphate = 5-phospho-alpha-D-ribose 1-diphosphate + anthranilate. The protein operates within amino-acid biosynthesis; L-tryptophan biosynthesis; L-tryptophan from chorismate: step 2/5. Its function is as follows. Catalyzes the transfer of the phosphoribosyl group of 5-phosphorylribose-1-pyrophosphate (PRPP) to anthranilate to yield N-(5'-phosphoribosyl)-anthranilate (PRA). This chain is Anthranilate phosphoribosyltransferase, found in Streptococcus pneumoniae serotype 19F (strain G54).